A 232-amino-acid polypeptide reads, in one-letter code: Probable proteasome subunit alpha type-3 (232 aa).

Belongs to the peptidase T1A family. In terms of assembly, the 26S proteasome consists of a 20S proteasome core and two 19S regulatory subunits. The 20S proteasome core is composed of 28 subunits that are arranged in four stacked rings, resulting in a barrel-shaped structure. The two end rings are each formed by seven alpha subunits, and the two central rings are each formed by seven beta subunits. The catalytic chamber with the active sites is on the inside of the barrel.

Its subcellular location is the cytoplasm. The protein resides in the nucleus. The proteasome degrades poly-ubiquitinated proteins in the cytoplasm and in the nucleus. It is essential for the regulated turnover of proteins and for the removal of misfolded proteins. The proteasome is a multicatalytic proteinase complex that is characterized by its ability to cleave peptides with Arg, Phe, Tyr, Leu, and Glu adjacent to the leaving group at neutral or slightly basic pH. It has an ATP-dependent proteolytic activity. The chain is Probable proteasome subunit alpha type-3 (PRE9) from Encephalitozoon cuniculi (strain GB-M1) (Microsporidian parasite).